The chain runs to 180 residues: Ribulose bisphosphate carboxylase small subunit, chloroplastic 5 (180 aa).

Residues 1-56 (MASSVMSSAAVATRGNGAQASMVAPFTGLKSTASFPVSRKQNLDITSIASNGGRVR) constitute a chloroplast transit peptide.

This sequence belongs to the RuBisCO small chain family. In terms of assembly, heterohexadecamer of 8 large and 8 small subunits.

The protein resides in the plastid. Its subcellular location is the chloroplast. Its function is as follows. RuBisCO catalyzes two reactions: the carboxylation of D-ribulose 1,5-bisphosphate, the primary event in carbon dioxide fixation, as well as the oxidative fragmentation of the pentose substrate. Both reactions occur simultaneously and in competition at the same active site. Although the small subunit is not catalytic it is essential for maximal activity. In Solanum tuberosum (Potato), this protein is Ribulose bisphosphate carboxylase small subunit, chloroplastic 5.